A 475-amino-acid chain; its full sequence is Putative aldehyde dehydrogenase (475 aa).

Residues 146 to 147 (WN) and 223 to 224 (GS) each bind NAD(+). E245 serves as the catalytic Proton acceptor. An NAD(+)-binding site is contributed by L246. The active-site Nucleophile is the C279. E379 contacts NAD(+).

This sequence belongs to the aldehyde dehydrogenase family.

It carries out the reaction an aldehyde + NAD(+) + H2O = a carboxylate + NADH + 2 H(+). The polypeptide is Putative aldehyde dehydrogenase (Staphylococcus aureus (strain USA300)).